We begin with the raw amino-acid sequence, 356 residues long: Holliday junction branch migration complex subunit RuvB (356 aa).

Positions 1 to 14 are enriched in polar residues; sequence MAIVSSITNHSSLP. The tract at residues 1 to 20 is disordered; the sequence is MAIVSSITNHSSLPNDKGEE. Residues 13–201 form a large ATPase domain (RuvB-L) region; it reads LPNDKGEERL…FGITQRLDFY (189 aa). Residues Leu-40, Arg-41, Gly-82, Lys-85, Thr-86, Thr-87, Arg-191, Tyr-201, and Arg-238 each coordinate ATP. Position 86 (Thr-86) interacts with Mg(2+). The small ATPAse domain (RuvB-S) stretch occupies residues 202–273; the sequence is NYLDLENIIK…VVNDALDLHR (72 aa). Residues 276-356 form a head domain (RuvB-H) region; that stretch reads QRGLDATDRS…LLTSPNNIDK (81 aa). DNA is bound by residues Arg-331 and Arg-336.

It belongs to the RuvB family. In terms of assembly, homohexamer. Forms an RuvA(8)-RuvB(12)-Holliday junction (HJ) complex. HJ DNA is sandwiched between 2 RuvA tetramers; dsDNA enters through RuvA and exits via RuvB. An RuvB hexamer assembles on each DNA strand where it exits the tetramer. Each RuvB hexamer is contacted by two RuvA subunits (via domain III) on 2 adjacent RuvB subunits; this complex drives branch migration. In the full resolvosome a probable DNA-RuvA(4)-RuvB(12)-RuvC(2) complex forms which resolves the HJ.

The protein localises to the cytoplasm. It carries out the reaction ATP + H2O = ADP + phosphate + H(+). Functionally, the RuvA-RuvB-RuvC complex processes Holliday junction (HJ) DNA during genetic recombination and DNA repair, while the RuvA-RuvB complex plays an important role in the rescue of blocked DNA replication forks via replication fork reversal (RFR). RuvA specifically binds to HJ cruciform DNA, conferring on it an open structure. The RuvB hexamer acts as an ATP-dependent pump, pulling dsDNA into and through the RuvAB complex. RuvB forms 2 homohexamers on either side of HJ DNA bound by 1 or 2 RuvA tetramers; 4 subunits per hexamer contact DNA at a time. Coordinated motions by a converter formed by DNA-disengaged RuvB subunits stimulates ATP hydrolysis and nucleotide exchange. Immobilization of the converter enables RuvB to convert the ATP-contained energy into a lever motion, pulling 2 nucleotides of DNA out of the RuvA tetramer per ATP hydrolyzed, thus driving DNA branch migration. The RuvB motors rotate together with the DNA substrate, which together with the progressing nucleotide cycle form the mechanistic basis for DNA recombination by continuous HJ branch migration. Branch migration allows RuvC to scan DNA until it finds its consensus sequence, where it cleaves and resolves cruciform DNA. In Prochlorococcus marinus (strain NATL2A), this protein is Holliday junction branch migration complex subunit RuvB.